We begin with the raw amino-acid sequence, 155 residues long: Perlucin (155 aa).

Intrachain disulfides connect cysteine 2-cysteine 13, cysteine 30-cysteine 127, and cysteine 102-cysteine 119. A C-type lectin domain is found at 9 to 128 (NRRSCYWFST…CQKPSHFICE (120 aa)). Asparagine 84 carries N-linked (GlcNAc...) asparagine glycosylation. Tandem repeats lie at residues 136-145 (NSLHANLQQR) and 146-155 (DSLHANLQQR).

In terms of processing, glycosylated.

May promote nucleation and/or growth of calcium carbonate crystals. Binds to D-galactose and D-mannose/D-glucose. This is Perlucin from Haliotis laevigata (Smooth Australian abalone).